The following is a 361-amino-acid chain: 3-dehydroquinate synthase (361 aa).

Residues 72-77 (SGEKEK), 130-131 (TT), K142, and K151 contribute to the NAD(+) site. Residues E184, H247, and H264 each coordinate Zn(2+).

It belongs to the sugar phosphate cyclases superfamily. Dehydroquinate synthase family. Requires Co(2+) as cofactor. Zn(2+) serves as cofactor. It depends on NAD(+) as a cofactor.

It is found in the cytoplasm. It catalyses the reaction 7-phospho-2-dehydro-3-deoxy-D-arabino-heptonate = 3-dehydroquinate + phosphate. The protein operates within metabolic intermediate biosynthesis; chorismate biosynthesis; chorismate from D-erythrose 4-phosphate and phosphoenolpyruvate: step 2/7. Catalyzes the conversion of 3-deoxy-D-arabino-heptulosonate 7-phosphate (DAHP) to dehydroquinate (DHQ). The sequence is that of 3-dehydroquinate synthase from Bacillus mycoides (strain KBAB4) (Bacillus weihenstephanensis).